The sequence spans 300 residues: tRNA pseudouridine synthase B (300 aa).

D44 functions as the Nucleophile in the catalytic mechanism.

The protein belongs to the pseudouridine synthase TruB family. Type 1 subfamily.

The enzyme catalyses uridine(55) in tRNA = pseudouridine(55) in tRNA. Its function is as follows. Responsible for synthesis of pseudouridine from uracil-55 in the psi GC loop of transfer RNAs. In Corynebacterium diphtheriae (strain ATCC 700971 / NCTC 13129 / Biotype gravis), this protein is tRNA pseudouridine synthase B.